A 400-amino-acid chain; its full sequence is Subtilisin-like protease 11 (400 aa).

Positions 1–19 (MGLFKVIFTAVAALSAVDA) are cleaved as a signal peptide. A propeptide spanning residues 20–117 (AELLSSAKSK…VEHDRHVYIS (98 aa)) is cleaved from the precursor. Residues 35–116 (SYLVVMKDSV…FVEHDRHVYI (82 aa)) enclose the Inhibitor I9 domain. Residues 127–400 (SWGLGRVSHR…NKLLYNGSGK (274 aa)) form the Peptidase S8 domain. Residue N138 is glycosylated (N-linked (GlcNAc...) asparagine). D159 functions as the Charge relay system in the catalytic mechanism. A glycan (N-linked (GlcNAc...) asparagine) is linked at N181. H191 (charge relay system) is an active-site residue. 2 N-linked (GlcNAc...) asparagine glycosylation sites follow: N252 and N337. S346 acts as the Charge relay system in catalysis. 2 N-linked (GlcNAc...) asparagine glycosylation sites follow: N388 and N396.

The protein belongs to the peptidase S8 family.

The protein localises to the secreted. Functionally, secreted subtilisin-like serine protease with keratinolytic activity that contributes to pathogenicity. The polypeptide is Subtilisin-like protease 11 (SUB11) (Arthroderma benhamiae (strain ATCC MYA-4681 / CBS 112371) (Trichophyton mentagrophytes)).